Consider the following 234-residue polypeptide: Leucyl/phenylalanyl-tRNA--protein transferase (234 aa).

This sequence belongs to the L/F-transferase family.

Its subcellular location is the cytoplasm. The enzyme catalyses N-terminal L-lysyl-[protein] + L-leucyl-tRNA(Leu) = N-terminal L-leucyl-L-lysyl-[protein] + tRNA(Leu) + H(+). The catalysed reaction is N-terminal L-arginyl-[protein] + L-leucyl-tRNA(Leu) = N-terminal L-leucyl-L-arginyl-[protein] + tRNA(Leu) + H(+). It catalyses the reaction L-phenylalanyl-tRNA(Phe) + an N-terminal L-alpha-aminoacyl-[protein] = an N-terminal L-phenylalanyl-L-alpha-aminoacyl-[protein] + tRNA(Phe). Functions in the N-end rule pathway of protein degradation where it conjugates Leu, Phe and, less efficiently, Met from aminoacyl-tRNAs to the N-termini of proteins containing an N-terminal arginine or lysine. This chain is Leucyl/phenylalanyl-tRNA--protein transferase, found in Klebsiella pneumoniae (strain 342).